A 372-amino-acid chain; its full sequence is Probable basic-leucine zipper transcription factor G (372 aa).

Disordered stretches follow at residues 1-20 (MLSVWNLPVEQQPQQQQQQQ) and 176-234 (TTNN…EKFE). Composition is skewed to low complexity over residues 11-20 (QQPQQQQQQQ) and 176-215 (TTNNNNNNNNNNNNNNNNNNSNNNNSNNNNINNNNNKSNT). Polar residues predominate over residues 223–234 (IRNSNSTFEKFE). In terms of domain architecture, bZIP spans 277-340 (ELKRQKRLIK…LILKAEVGQL (64 aa)). The interval 279 to 301 (KRQKRLIKNRESAHLSRQRKRER) is basic motif. The interval 305 to 340 (LEHRVEELSSNSIDINKTLSSLENENLILKAEVGQL) is leucine-zipper.

Belongs to the bZIP family.

It localises to the nucleus. Functionally, probable transcriptional regulator. The sequence is that of Probable basic-leucine zipper transcription factor G (bzpG) from Dictyostelium discoideum (Social amoeba).